We begin with the raw amino-acid sequence, 66 residues long: MDWLAKYWWILVLVFLVGVLLNVIKDLKRIDHKKFLANKPELPPHRDFNDKWDDEDDWPKKDQPKK.

The helical transmembrane segment at 4–24 (LAKYWWILVLVFLVGVLLNVI) threads the bilayer. The tract at residues 39 to 66 (KPELPPHRDFNDKWDDEDDWPKKDQPKK) is disordered. Residues 42–51 (LPPHRDFNDK) show a composition bias toward basic and acidic residues.

This sequence belongs to the UPF0370 family.

The protein resides in the cell membrane. The chain is UPF0370 protein YpfN from Salmonella paratyphi C (strain RKS4594).